The chain runs to 618 residues: Protease 4 (618 aa).

Residues 1-24 (MRTLWRFIAGFFKWTWRVLNFVRE) are Cytoplasmic-facing. Residues 25–45 (MVLNLFFIFLVLVGVGIWMQI) form a helical membrane-spanning segment. Topologically, residues 46–618 (GNGSNSEQTA…AFCLTCANVR (573 aa)) are periplasmic. Lys209 functions as the Proton donor/acceptor in the catalytic mechanism. The active-site Nucleophile is the Ser409.

The protein belongs to the peptidase S49 family. As to quaternary structure, homotetramer.

Its subcellular location is the cell inner membrane. Digests cleaved signal peptides in vitro, its in vivo function is unknown. This activity is necessary to maintain proper secretion of mature proteins across the membrane. This is Protease 4 (sppA) from Salmonella typhi.